A 218-amino-acid polypeptide reads, in one-letter code: Large ribosomal subunit protein bL25 (218 aa).

Residues 197–218 (PAEESGEKPVAHIEEKESTEKE) form a disordered region. Over residues 201–218 (SGEKPVAHIEEKESTEKE) the composition is skewed to basic and acidic residues.

It belongs to the bacterial ribosomal protein bL25 family. CTC subfamily. In terms of assembly, part of the 50S ribosomal subunit; part of the 5S rRNA/L5/L18/L25 subcomplex. Contacts the 5S rRNA. Binds to the 5S rRNA independently of L5 and L18.

In terms of biological role, this is one of the proteins that binds to the 5S RNA in the ribosome where it forms part of the central protuberance. The chain is Large ribosomal subunit protein bL25 from Dehalococcoides mccartyi (strain ATCC BAA-2100 / JCM 16839 / KCTC 5957 / BAV1).